Consider the following 198-residue polypeptide: FMN-dependent NADH:quinone oxidoreductase (198 aa).

Residues 92–95 (MWNL) and 136–139 (SRGG) contribute to the FMN site.

It belongs to the azoreductase type 1 family. As to quaternary structure, homodimer. The cofactor is FMN.

It catalyses the reaction 2 a quinone + NADH + H(+) = 2 a 1,4-benzosemiquinone + NAD(+). It carries out the reaction N,N-dimethyl-1,4-phenylenediamine + anthranilate + 2 NAD(+) = 2-(4-dimethylaminophenyl)diazenylbenzoate + 2 NADH + 2 H(+). Its function is as follows. Quinone reductase that provides resistance to thiol-specific stress caused by electrophilic quinones. Also exhibits azoreductase activity. Catalyzes the reductive cleavage of the azo bond in aromatic azo compounds to the corresponding amines. The protein is FMN-dependent NADH:quinone oxidoreductase of Clostridium perfringens (strain ATCC 13124 / DSM 756 / JCM 1290 / NCIMB 6125 / NCTC 8237 / Type A).